A 114-amino-acid chain; its full sequence is T cell receptor beta variable 5-8 (114 aa).

The signal sequence occupies residues M1–A21. The region spanning G22 to L114 is the Ig-like domain. An intrachain disulfide couples C42 to C110. N90 carries N-linked (GlcNAc...) asparagine glycosylation.

As to quaternary structure, alpha-beta TR is a heterodimer composed of an alpha and beta chain; disulfide-linked. The alpha-beta TR is associated with the transmembrane signaling CD3 coreceptor proteins to form the TR-CD3 (TcR or TCR). The assembly of alpha-beta TR heterodimers with CD3 occurs in the endoplasmic reticulum where a single alpha-beta TR heterodimer associates with one CD3D-CD3E heterodimer, one CD3G-CD3E heterodimer and one CD247 homodimer forming a stable octameric structure. CD3D-CD3E and CD3G-CD3E heterodimers preferentially associate with TR alpha and TR beta chains, respectively. The association of the CD247 homodimer is the last step of TcR assembly in the endoplasmic reticulum and is required for transport to the cell surface.

It localises to the cell membrane. Its function is as follows. V region of the variable domain of T cell receptor (TR) beta chain that participates in the antigen recognition. Alpha-beta T cell receptors are antigen specific receptors which are essential to the immune response and are present on the cell surface of T lymphocytes. Recognize peptide-major histocompatibility (MH) (pMH) complexes that are displayed by antigen presenting cells (APC), a prerequisite for efficient T cell adaptive immunity against pathogens. Binding of alpha-beta TR to pMH complex initiates TR-CD3 clustering on the cell surface and intracellular activation of LCK that phosphorylates the ITAM motifs of CD3G, CD3D, CD3E and CD247 enabling the recruitment of ZAP70. In turn ZAP70 phosphorylates LAT, which recruits numerous signaling molecules to form the LAT signalosome. The LAT signalosome propagates signal branching to three major signaling pathways, the calcium, the mitogen-activated protein kinase (MAPK) kinase and the nuclear factor NF-kappa-B (NF-kB) pathways, leading to the mobilization of transcription factors that are critical for gene expression and essential for T cell growth and differentiation. The T cell repertoire is generated in the thymus, by V-(D)-J rearrangement. This repertoire is then shaped by intrathymic selection events to generate a peripheral T cell pool of self-MH restricted, non-autoaggressive T cells. Post-thymic interaction of alpha-beta TR with the pMH complexes shapes TR structural and functional avidity. The sequence is that of T cell receptor beta variable 5-8 from Homo sapiens (Human).